The sequence spans 190 residues: Adenylate kinase (190 aa).

Ala-10–Thr-15 lines the ATP pocket. Positions Ser-30 to Val-59 are NMP. Residues Thr-31, Arg-36, Glu-57 to Val-59, Gly-85 to Arg-88, and Gln-92 each bind AMP. The tract at residues Gly-126–Asp-136 is LID. Arg-127 is an ATP binding site. Residues Arg-133 and Arg-144 each coordinate AMP. An ATP-binding site is contributed by Gly-172.

This sequence belongs to the adenylate kinase family. In terms of assembly, monomer.

The protein resides in the cytoplasm. It catalyses the reaction AMP + ATP = 2 ADP. The protein operates within purine metabolism; AMP biosynthesis via salvage pathway; AMP from ADP: step 1/1. In terms of biological role, catalyzes the reversible transfer of the terminal phosphate group between ATP and AMP. Plays an important role in cellular energy homeostasis and in adenine nucleotide metabolism. The polypeptide is Adenylate kinase (Phenylobacterium zucineum (strain HLK1)).